The primary structure comprises 201 residues: Putative 3-methyladenine DNA glycosylase (201 aa).

The protein belongs to the DNA glycosylase MPG family.

The polypeptide is Putative 3-methyladenine DNA glycosylase (Trichodesmium erythraeum (strain IMS101)).